Reading from the N-terminus, the 1740-residue chain is SH3 and multiple ankyrin repeat domains protein 3 (1740 aa).

An intramolecular interaction with the ANK repeats region spans residues 1–75 (MDGPGASAVV…KFLDEERLLQ (75 aa)). Tyr-122 carries the post-translational modification Phosphotyrosine. ANK repeat units lie at residues 148–181 (SGECPLSLAAQLDNATDLLKVLRNGGAHLDFRTR), 182–214 (DGLTAVHCATRQRNAGALTTLLDLGASPDYKDS), 215–245 (RGLTPLYHSALGGGDALCCELLLHDHAQLGT), 249–278 (NGWQEIHQACRFGHVQHLEHLLFYGANMGA), 282–311 (SGNTALHICALYNQESCARVLLFRGANKDV), and 315–345 (NSQTAFQVAIIAGNFELAEVIKTHKDSDVVP). The tract at residues 354-466 (KRRRLAGPSG…PPPRGPKRKL (113 aa)) is disordered. Ser-373, Ser-375, Ser-387, and Ser-394 each carry phosphoserine. Residues 404 to 415 (LQEEKDRDRDGE) show a composition bias toward basic and acidic residues. The span at 444-460 (APGPGPASPAPPAPPPR) shows a compositional bias: pro residues. An SH3 domain is found at 470–529 (VPGRKFIAVKAHSPQGEGEIPLHRGEAVKVLSIGEGGFWEGTVKGRTGWFPADCVEEVQM). The residue at position 482 (Ser-482) is a Phosphoserine. Tyr-555 is modified (phosphotyrosine). Positions 570–664 (VAILQKRDHE…RLVMKVVSVT (95 aa)) constitute a PDZ domain. Residues 664-687 (TRKPEEDSARRRAPPPPKRAPSTT) are disordered. The tract at residues 677–684 (PPPPKRAP) is required for interaction with ABI1. Residues Ser-694, Ser-781, Ser-790, and Ser-801 each carry the phosphoserine modification. 5 disordered regions span residues 759–855 (RQGL…RSSF), 868–1053 (AGLY…QPSR), 1115–1199 (AARE…MILS), 1211–1463 (LIVV…GPAR), and 1476–1518 (GDPV…EPVG). Pro residues predominate over residues 812 to 845 (IPPPPQTAPPPPPAPYYFDSGPPPTFSPPPPPPG). Phosphoserine is present on residues Ser-891 and Ser-898. Thr-913 carries the post-translational modification Phosphothreonine. Tyr-931 bears the Phosphotyrosine mark. Asymmetric dimethylarginine is present on Arg-966. Basic and acidic residues predominate over residues 1017–1027 (VKERRLEERRR). Residues 1123 to 1132 (SQTPSRSPTP) show a composition bias toward polar residues. Thr-1131 carries the post-translational modification Phosphothreonine. 4 positions are modified to phosphoserine: Ser-1135, Ser-1160, Ser-1164, and Ser-1167. The segment covering 1175 to 1195 (ARREAEKPTREERKSPEDKKS) has biased composition (basic and acidic residues). Thr-1235 carries the post-translational modification Phosphothreonine. Composition is skewed to pro residues over residues 1252-1262 (MPSPRAQPPGS) and 1322-1334 (TPPPGPGPLPTTV). Ser-1254 bears the Phosphoserine mark. Positions 1335 to 1344 (PSPASGKPSS) are enriched in low complexity. Basic and acidic residues predominate over residues 1361–1371 (ADTRSSSDPHL). The span at 1372–1393 (ETTSTISTVSSMSTLSSESGEL) shows a compositional bias: low complexity. The SH3-binding signature appears at 1411 to 1417 (PPVPPKP). Residue Ser-1421 is modified to Phosphoserine. Positions 1495–1515 (ISELSSRLQQLNKDTRSLGEE) form a coiled coil. The segment covering 1496 to 1506 (SELSSRLQQLN) has biased composition (polar residues). Residues Ser-1511, Ser-1522, Ser-1530, and Ser-1549 each carry the phosphoserine modification. 2 disordered regions span residues 1556–1594 (ISAQRSPGGPGGGASYSVRPSGRYPVARRAPSPVKPASL) and 1637–1673 (VRSVSARSRSPSPSPLPSPSPGSGPSAGPRRPFQQKP). Over residues 1637–1647 (VRSVSARSRSP) the composition is skewed to low complexity. A phosphoserine mark is found at Ser-1644, Ser-1646, and Ser-1648. The span at 1648–1658 (SPSPLPSPSPG) shows a compositional bias: pro residues. Positions 1659–1668 (SGPSAGPRRP) are enriched in low complexity. One can recognise an SAM domain in the interval 1677 to 1740 (WSKFDVGDWL…ERALRQLDGS (64 aa)).

It belongs to the SHANK family. As to quaternary structure, may homomultimerize via its SAM domain. Interacts with BAIAP2, DBNL and SLC17A7/VGLUT1. Interacts with DLGAP1/GKAP, GRM1/MGLUR1, GRM5/MGLUR5 and LZTS3 C-termini via its PDZ domain. Interacts with ABI1, HOMER1, HOMER2, HOMER3 and CTTN/cortactin SH3 domain. Is part of a complex with DLG4/PSD-95 and DLGAP1/GKAP. Interacts (via PDZ domain) with the GRIA1 subunit of the AMPA receptor (via PDZ-binding motif). Interacts with WASF1 and CYFIP2; the interactions mediate the association of SHANK3 with the WAVE1 complex. Interacts with ARPC2; the interaction probably mediates the association of SHANK3 with the Arp2/3 complex. Interacts (via ANK repeats) with SHARPIN and SPTAN1. Interacts (via PDZ domain) with ARHGAP44 (probably via PDZ-binding motif); the interaction takes place in dendritic spines and promotes GRIA1 exocytosis. Interacts with CAMK2A. Interacts with DIP2A. Interacts with ADGRL3. In terms of tissue distribution, widely expressed in brain (at protein level).

The protein resides in the cytoplasm. The protein localises to the postsynaptic density. It localises to the cell projection. Its subcellular location is the dendritic spine. Functionally, major scaffold postsynaptic density protein which interacts with multiple proteins and complexes to orchestrate the dendritic spine and synapse formation, maturation and maintenance. Interconnects receptors of the postsynaptic membrane including NMDA-type and metabotropic glutamate receptors via complexes with GKAP/PSD-95 and HOMER, respectively, and the actin-based cytoskeleton. Plays a role in the structural and functional organization of the dendritic spine and synaptic junction through the interaction with Arp2/3 and WAVE1 complex as well as the promotion of the F-actin clusters. By way of this control of actin dynamics, participates in the regulation of developing neurons growth cone motility and the NMDA receptor-signaling. Also modulates GRIA1 exocytosis and GRM5/MGLUR5 expression and signaling to control the AMPA and metabotropic glutamate receptor-mediated synaptic transmission and plasticity. May be required at an early stage of synapse formation and be inhibited by IGF1 to promote synapse maturation. This Rattus norvegicus (Rat) protein is SH3 and multiple ankyrin repeat domains protein 3 (Shank3).